Consider the following 359-residue polypeptide: DNA polymerase IV (359 aa).

Residues 4-184 (IVHVDMDAFY…LPVNRIPGVG (181 aa)) enclose the UmuC domain. Asp-8 and Asp-102 together coordinate Mg(2+). Glu-103 is a catalytic residue.

This sequence belongs to the DNA polymerase type-Y family. Monomer. Mg(2+) serves as cofactor.

The protein resides in the cytoplasm. The enzyme catalyses DNA(n) + a 2'-deoxyribonucleoside 5'-triphosphate = DNA(n+1) + diphosphate. Functionally, poorly processive, error-prone DNA polymerase involved in untargeted mutagenesis. Copies undamaged DNA at stalled replication forks, which arise in vivo from mismatched or misaligned primer ends. These misaligned primers can be extended by PolIV. Exhibits no 3'-5' exonuclease (proofreading) activity. May be involved in translesional synthesis, in conjunction with the beta clamp from PolIII. The sequence is that of DNA polymerase IV from Xanthomonas campestris pv. campestris (strain 8004).